Consider the following 214-residue polypeptide: Large ribosomal subunit protein uL16-like (214 aa).

It belongs to the universal ribosomal protein uL16 family. In terms of assembly, component of a male germ cell-specific 60S large ribosomal subunit (LSU), which contains RPL10L and RPL39L, instead of RPL10 and RPL39 paralogs. The composition of the rest of the complex is similar to classical ribosomes. As to expression, testis-specific.

The protein localises to the cytoplasm. Functionally, testis-specific component of the ribosome, which is required for the transition from prophase to metaphase in male meiosis I. Compensates for the inactivated X-linked RPL10 paralog during spermatogenesis. The ribosome is a large ribonucleoprotein complex responsible for the synthesis of proteins in the cell. The male germ cell-specific ribosome displays a ribosomal polypeptide exit tunnel of distinct size and charge states compared with the classical ribosome. It is responsible for regulating the biosynthesis and folding of a subset of male germ-cell-specific proteins that are essential for the formation of sperm. The sequence is that of Large ribosomal subunit protein uL16-like from Mus musculus (Mouse).